Here is a 567-residue protein sequence, read N- to C-terminus: Frizzled-7 (567 aa).

Residues 1-31 (MRPAAGEAGAGLRWLGLAALLAALLGTPCAA) form the signal peptide. The Extracellular portion of the chain corresponds to 32–250 (AHHEDKAISV…EAEVRFARLW (219 aa)). The FZ domain occupies 42–161 (PDHGFCQPIS…HGAGEICVGQ (120 aa)). 5 cysteine pairs are disulfide-bonded: Cys47–Cys108, Cys55–Cys101, Cys92–Cys129, Cys118–Cys158, and Cys122–Cys146. Residue Asn61 is glycosylated (N-linked (GlcNAc...) asparagine). Asn162 is a glycosylation site (N-linked (GlcNAc...) asparagine). A helical transmembrane segment spans residues 251 to 271 (VGVWSVLCCASTLFTVLTYLV). Residues 272 to 282 (DMRRFSYPERP) are Cytoplasmic-facing. The chain crosses the membrane as a helical span at residues 283 to 303 (IIFLSGCYFMVAVAYAAGFLL). Topologically, residues 304–330 (EERVVCLERFSEDGYRTVAQGTKKEGC) are extracellular. A helical transmembrane segment spans residues 331-351 (TILFMILYFFGMASSIWWVIL). Residues 352–373 (SLTWFLAAGMKWGHEAIEANSQ) lie on the Cytoplasmic side of the membrane. A helical membrane pass occupies residues 374–394 (YFHLAAWAVPAVKTITILAMG). The Extracellular portion of the chain corresponds to 395–417 (QVDGDVLSGVCYVGIYSVDSLRG). A helical membrane pass occupies residues 418–438 (FVLAPLFVYLFIGTSFLLAGF). At 439-464 (VSLFRIRTIMKHDGTKTEKLEKLMVR) the chain is on the cytoplasmic side. A helical transmembrane segment spans residues 465–485 (IGVFSVLYTVPATIVVACYFY). The Extracellular portion of the chain corresponds to 486–521 (EQAFRSTWEKTWLLQTCKTYAVPCPSHFAPMSPDFT). Residues 522–542 (VFMIKYLMTMIVGITTGFWIW) form a helical membrane-spanning segment. The Cytoplasmic portion of the chain corresponds to 543–567 (SGKTLQSWRRFYHRLSTGSKGETAV). A Lys-Thr-X-X-X-Trp motif, mediates interaction with the PDZ domain of Dvl family members motif is present at residues 545-550 (KTLQSW). A PDZ-binding motif is present at residues 565–567 (TAV).

It belongs to the G-protein coupled receptor Fz/Smo family. Expressed broadly in cranial ectoderm. Also expressed in the developing somites and in other cranial placodes, including the olfactory, lens, otic placodes (lateral half of the vesicle) and epibranchial placodes. Low level of expression in all the mesoderm derivatives in the limb buds.

The protein localises to the cell membrane. Its subcellular location is the endosome membrane. Receptor for Wnt proteins. Most of frizzled receptors are coupled to the beta-catenin canonical signaling pathway, which leads to the activation of disheveled proteins, inhibition of GSK-3 kinase, nuclear accumulation of beta-catenin and activation of Wnt target genes. A second signaling pathway involving PKC and calcium fluxes has been seen for some family members, but it is not yet clear if it represents a distinct pathway or if it can be integrated in the canonical pathway, as PKC seems to be required for Wnt-mediated inactivation of GSK-3 kinase. Both pathways seem to involve interactions with G-proteins. May be involved in transduction and intercellular transmission of polarity information during tissue morphogenesis and/or in differentiated tissues. This is Frizzled-7 (FZD7) from Gallus gallus (Chicken).